The following is an 803-amino-acid chain: Translation initiation factor IF-2 (803 aa).

The span at Pro-65 to Thr-75 shows a compositional bias: basic and acidic residues. The interval Pro-65 to Lys-186 is disordered. Positions Asn-175–Leu-185 are enriched in basic residues. The region spanning Ile-300–Glu-468 is the tr-type G domain. A G1 region spans residues Gly-309–Thr-316. Position 309–316 (Gly-309–Thr-316) interacts with GTP. The segment at Gly-334–His-338 is G2. A G3 region spans residues Asp-355–Gly-358. GTP is bound by residues Asp-355–His-359 and Asn-409–Asp-412. Positions Asn-409–Asp-412 are G4. The tract at residues Ser-445 to Lys-447 is G5.

Belongs to the TRAFAC class translation factor GTPase superfamily. Classic translation factor GTPase family. IF-2 subfamily.

It localises to the cytoplasm. Its function is as follows. One of the essential components for the initiation of protein synthesis. Protects formylmethionyl-tRNA from spontaneous hydrolysis and promotes its binding to the 30S ribosomal subunits. Also involved in the hydrolysis of GTP during the formation of the 70S ribosomal complex. In Tropheryma whipplei (strain Twist) (Whipple's bacillus), this protein is Translation initiation factor IF-2.